Here is a 312-residue protein sequence, read N- to C-terminus: Probable carboxylesterase 7 (312 aa).

Residue Met-1 is modified to N-acetylmethionine. Positions 75–77 (HGG) match the Involved in the stabilization of the negatively charged intermediate by the formation of the oxyanion hole motif. Active-site residues include Ser-159, Asp-255, and His-287.

It belongs to the 'GDXG' lipolytic enzyme family. Expressed in leaves, stems, flowers and siliques.

It catalyses the reaction a carboxylic ester + H2O = an alcohol + a carboxylate + H(+). Functionally, carboxylesterase acting on esters with varying acyl chain length. The chain is Probable carboxylesterase 7 (CXE7) from Arabidopsis thaliana (Mouse-ear cress).